We begin with the raw amino-acid sequence, 182 residues long: LIM domain-containing protein C (182 aa).

2 LIM zinc-binding domains span residues 3–63 (SICP…LFRQ) and 110–170 (TNCP…KFGP).

It is found in the cell projection. It localises to the pseudopodium. The protein resides in the cytoplasm. The protein localises to the cell cortex. Its subcellular location is the cytoskeleton. Functionally, binds to F-actin and may modulate the chemotactic response during early development and contribute to the maintenance of the strength of the actin cytoskeleton. The protein is LIM domain-containing protein C (limC) of Dictyostelium discoideum (Social amoeba).